A 359-amino-acid polypeptide reads, in one-letter code: 3-dehydroquinate synthase (359 aa).

NAD(+)-binding positions include 72 to 77, 106 to 110, 130 to 131, Lys-143, Lys-152, and 170 to 173; these read EGEEHK, GVVGD, TT, and TLTT. Glu-185, His-248, and His-265 together coordinate Zn(2+).

Belongs to the sugar phosphate cyclases superfamily. Dehydroquinate synthase family. Co(2+) is required as a cofactor. It depends on Zn(2+) as a cofactor. The cofactor is NAD(+).

The protein localises to the cytoplasm. The enzyme catalyses 7-phospho-2-dehydro-3-deoxy-D-arabino-heptonate = 3-dehydroquinate + phosphate. It participates in metabolic intermediate biosynthesis; chorismate biosynthesis; chorismate from D-erythrose 4-phosphate and phosphoenolpyruvate: step 2/7. Its function is as follows. Catalyzes the conversion of 3-deoxy-D-arabino-heptulosonate 7-phosphate (DAHP) to dehydroquinate (DHQ). The protein is 3-dehydroquinate synthase of Pelobacter propionicus (strain DSM 2379 / NBRC 103807 / OttBd1).